The sequence spans 163 residues: Pheromone-binding protein 1 (163 aa).

Positions 1-21 (MLGKISLLLLPVFVAINLVHS) are cleaved as a signal peptide. 3 cysteine pairs are disulfide-bonded: Cys-40–Cys-75, Cys-71–Cys-129, and Cys-118–Cys-138.

Belongs to the PBP/GOBP family. Antenna.

In terms of biological role, this major soluble protein in olfactory sensilla of male moths might serve to solubilize the extremely hydrophobic pheromone molecules and to transport pheromone through the aqueous lymph to receptors located on olfactory cilia. The protein is Pheromone-binding protein 1 of Antheraea pernyi (Chinese oak silk moth).